The chain runs to 128 residues: Large-conductance mechanosensitive channel (128 aa).

2 helical membrane passes run 10 to 30 (FAMRGNVVDMAVGVIIGGAFG) and 76 to 96 (GLFIQNVFDFIIIAFAIFMMV).

It belongs to the MscL family. Homopentamer.

The protein resides in the cell inner membrane. In terms of biological role, channel that opens in response to stretch forces in the membrane lipid bilayer. May participate in the regulation of osmotic pressure changes within the cell. The chain is Large-conductance mechanosensitive channel from Mannheimia succiniciproducens (strain KCTC 0769BP / MBEL55E).